The chain runs to 197 residues: LexA repressor (197 aa).

Positions 28–47 (VREIARRFRITPRGALLHLI) form a DNA-binding region, H-T-H motif. Catalysis depends on for autocatalytic cleavage activity residues Ser-119 and Lys-156.

Belongs to the peptidase S24 family. Homodimer.

The enzyme catalyses Hydrolysis of Ala-|-Gly bond in repressor LexA.. Its function is as follows. Represses a number of genes involved in the response to DNA damage (SOS response), including recA and lexA. In the presence of single-stranded DNA, RecA interacts with LexA causing an autocatalytic cleavage which disrupts the DNA-binding part of LexA, leading to derepression of the SOS regulon and eventually DNA repair. The sequence is that of LexA repressor from Thermotoga maritima (strain ATCC 43589 / DSM 3109 / JCM 10099 / NBRC 100826 / MSB8).